A 427-amino-acid chain; its full sequence is Serine/arginine (SR)-type shuttling mRNA binding protein GBP2 (427 aa).

The disordered stretch occupies residues 1–101 (MERELGMYGN…GRGGGRGRTL (101 aa)). A compositionally biased stretch (basic and acidic residues) spans 22-32 (RLSDDRDRYDD). The residue at position 24 (S24) is a Phosphoserine. The segment covering 35–44 (DSSSNNGNGS) has biased composition (low complexity). The span at 50 to 60 (DRGSRFNDRYD) shows a compositional bias: basic and acidic residues. RRM domains follow at residues 122-198 (NSIF…QDNP) and 219-296 (FEVF…EGRF). T130 carries the phosphothreonine modification. Residues 300–317 (KNNDRYNQRREDLEDTRG) are compositionally biased toward basic and acidic residues. The interval 300-319 (KNNDRYNQRREDLEDTRGTE) is disordered. The 78-residue stretch at 349 to 426 (CFIYCSNLPF…CSLQISYARR (78 aa)) folds into the RRM 3 domain.

Post-translationally, methylated by HMT1.

The protein resides in the cytoplasm. The protein localises to the nucleus. It is found in the chromosome. It localises to the telomere. Its subcellular location is the P-body. The protein resides in the stress granule. Functionally, binds to intron-containing transcripts and is involved in quality control for the export of spliced mRNAs from the nucleus. Binds to pre-mRNAs until splicing is completed or until faulty mRNAs are degraded. On correctly spliced mRNAs, GBP2 and HRB1 recruit MEX67 to allow nuclear export. On faulty mRNAs, GBP2 and HRB1 associate with the TRAMP complex that guides those pre-mRNAs to the exosome for degradation. Binds single-stranded telomeric sequences of the type (TG[1-3])n in vitro. Influences the localization of RAP1 in the nuclei. Involved in modulating telomere length. In Saccharomyces cerevisiae (strain ATCC 204508 / S288c) (Baker's yeast), this protein is Serine/arginine (SR)-type shuttling mRNA binding protein GBP2.